Reading from the N-terminus, the 449-residue chain is Naphthalene 1,2-dioxygenase system, large oxygenase component (449 aa).

The Rieske domain maps to W39–E137. [2Fe-2S] cluster is bound by residues C81, H83, C101, and H104. H208, H213, and D362 together coordinate Fe cation.

It belongs to the bacterial ring-hydroxylating dioxygenase alpha subunit family. The naphthalene dioxygenase (NDO) multicomponent enzyme system is composed of an electron transfer component and a dioxygenase component (iron sulfur protein (ISP)). The electron transfer component is composed of a ferredoxin reductase (NdoR) and a ferredoxin (NdoA), and the dioxygenase component is formed of a heterohexamer (trimer of heterodimers) of three large alpha subunits (NdoB) and three small beta subunits (NdoC). It depends on [2Fe-2S] cluster as a cofactor. Fe(2+) serves as cofactor.

The catalysed reaction is naphthalene + NADH + O2 + H(+) = (1R,2S)-1,2-dihydronaphthalene-1,2-diol + NAD(+). Its pathway is aromatic compound metabolism; naphthalene degradation. In terms of biological role, component of the naphthalene dioxygenase (NDO) multicomponent enzyme system which catalyzes the incorporation of both atoms of molecular oxygen into naphthalene to form cis-(1R,2S)-dihydroxy-1,2-dihydronaphthalene. The alpha subunit has a catalytic role in the holoenzyme. The chain is Naphthalene 1,2-dioxygenase system, large oxygenase component from Pseudomonas fluorescens.